We begin with the raw amino-acid sequence, 737 residues long: DNA topoisomerase 4 subunit A (737 aa).

Residues 32–496 (LPDVRDGLKP…SFEEVTLTNQ (465 aa)) enclose the Topo IIA-type catalytic domain. Residue Tyr120 is the O-(5'-phospho-DNA)-tyrosine intermediate of the active site.

This sequence belongs to the type II topoisomerase GyrA/ParC subunit family. ParC type 1 subfamily. In terms of assembly, heterotetramer composed of ParC and ParE.

The protein resides in the cell membrane. It catalyses the reaction ATP-dependent breakage, passage and rejoining of double-stranded DNA.. In terms of biological role, topoisomerase IV is essential for chromosome segregation. It relaxes supercoiled DNA. Performs the decatenation events required during the replication of a circular DNA molecule. This is DNA topoisomerase 4 subunit A from Rickettsia felis (strain ATCC VR-1525 / URRWXCal2) (Rickettsia azadi).